A 423-amino-acid polypeptide reads, in one-letter code: Glutamate-1-semialdehyde 2,1-aminomutase (423 aa).

At Lys-266 the chain carries N6-(pyridoxal phosphate)lysine.

This sequence belongs to the class-III pyridoxal-phosphate-dependent aminotransferase family. HemL subfamily. In terms of assembly, homodimer. Pyridoxal 5'-phosphate is required as a cofactor.

Its subcellular location is the cytoplasm. The catalysed reaction is (S)-4-amino-5-oxopentanoate = 5-aminolevulinate. The protein operates within porphyrin-containing compound metabolism; protoporphyrin-IX biosynthesis; 5-aminolevulinate from L-glutamyl-tRNA(Glu): step 2/2. The polypeptide is Glutamate-1-semialdehyde 2,1-aminomutase (Nitratidesulfovibrio vulgaris (strain DP4) (Desulfovibrio vulgaris)).